The chain runs to 95 residues: Mitochondrial import inner membrane translocase subunit Tim13 (95 aa).

A Twin CX3C motif motif is present at residues 46–69 (CFKKCIGKPGSTLDNSEQKCIAMC). Cystine bridges form between C46–C69 and C50–C65.

Belongs to the small Tim family. In terms of assembly, heterohexamer; composed of 3 copies of TIMM8 (TIMM8A or TIMM8B) and 3 copies of TIMM13, named soluble 70 kDa complex. Associates with the TIM22 complex, whose core is composed of TIMM22.

It localises to the mitochondrion inner membrane. Its function is as follows. Mitochondrial intermembrane chaperone that participates in the import and insertion of some multi-pass transmembrane proteins into the mitochondrial inner membrane. Also required for the transfer of beta-barrel precursors from the TOM complex to the sorting and assembly machinery (SAM complex) of the outer membrane. Acts as a chaperone-like protein that protects the hydrophobic precursors from aggregation and guide them through the mitochondrial intermembrane space. The TIMM8-TIMM13 complex mediates the import of some proteins while the predominant TIMM9-TIMM10 70 kDa complex mediates the import of much more proteins. The chain is Mitochondrial import inner membrane translocase subunit Tim13 (timm13) from Danio rerio (Zebrafish).